Here is a 582-residue protein sequence, read N- to C-terminus: Membrane-bound O-acyltransferase GUP1 (582 aa).

Over 1 to 61 the chain is Extracellular; that stretch reads MVIPRYHLIP…IIKQANPKSR (61 aa). Residues 62-82 form a helical membrane-spanning segment; sequence WSTIEFKFYYLVFLIIVPLMF. Residues 83-121 lie on the Cytoplasmic side of the membrane; the sequence is KAGMESANENNPNYPKYEHLLSNGWIFGRKVDNSDQQYR. Residues 122-144 traverse the membrane as a helical segment; it reads FFRNNFPLLCLLIIIHVGLRRVI. The Extracellular segment spans residues 145–158; that stretch reads NRIIPLSSKRTYFD. The helical transmembrane segment at 159 to 179 threads the bilayer; sequence FIFGIIFLIGAHGVNVLKLSI. Residues 180-195 lie on the Cytoplasmic side of the membrane; it reads HLLINYLIGKYIKNYK. Residues 196-216 traverse the membrane as a helical segment; the sequence is LSLWITWIYGISSLFFNEWYG. Residues 217–294 are Extracellular-facing; it reads NYTLGLSFLS…TAPLPIEDYN (78 aa). The helical transmembrane segment at 295 to 315 threads the bilayer; the sequence is IFNYISYLTYTPLFIAGPILT. The Cytoplasmic portion of the chain corresponds to 316–343; it reads FNDYIYQSNYQQSSSTKDYHRIMMYLIR. Residues 344 to 364 traverse the membrane as a helical segment; that stretch reads FIFCLLTLEFILHFMYVVAAS. Over 365 to 373 the chain is Extracellular; it reads KTKSWEGNL. The helical transmembrane segment at 374–394 threads the bilayer; the sequence is PFQISMLGMFNLNIIWLKLLI. At 395–454 the chain is on the cytoplasmic side; it reads PWRLFRLWSLLDGIDPPENMIRCMDNNFSALAFWRAWHRSYNRWIIRYIYLPMGGGGKYR. 2 consecutive transmembrane segments (helical) span residues 455–475 and 476–496; these read ILNS…ELKL and LMWG…TMIF. His-469 is an active-site residue. The Cytoplasmic segment spans residues 497-507; that stretch reads KKYRNQWWYRH. A helical membrane pass occupies residues 508–528; the sequence is LCGVGAVINIWMMMIANLVGF. The Extracellular segment spans residues 529–548; the sequence is CLGTDGMWKLLHDLFKTFDG. The chain crosses the membrane as a helical span at residues 549–569; the sequence is VRFLIISSGALFVGAQIMFEI. Topologically, residues 570–582 are cytoplasmic; sequence RESEMRKGINVRC.

Belongs to the membrane-bound acyltransferase family.

The protein resides in the cell membrane. The protein localises to the endoplasmic reticulum membrane. Its subcellular location is the mitochondrion membrane. Its function is as follows. Membrane-bound O-acyltransferase involved in the remodeling of glycosylphosphatidylinositol (GPI) anchors. Acts only on GPI-anchored proteins, but not on free GPI lipids. Also involved in lipid metabolism, having profound effects on sphingolipid-sterol-ordered domains integrity and assembly. Involved in cell integrity and apoptosis. In Candida tropicalis (Yeast), this protein is Membrane-bound O-acyltransferase GUP1 (GUP1).